The sequence spans 385 residues: Cytochrome b (385 aa).

4 helical membrane-spanning segments follow: residues 32-52, 76-98, 113-133, and 179-199; these read FGAL…FLAM, WLIR…IHVF, LWNL…LGYV, and FFSL…IHVA. Residues His-82 and His-96 each contribute to the heme b site. His-183 and His-197 together coordinate heme b. His-202 is an a ubiquinone binding site. A run of 4 helical transmembrane segments spans residues 226–246, 290–310, 322–342, and 349–369; these read FIFK…YAVF, LGGV…PFIT, SKTI…WIGF, and YLML…SLAV.

It belongs to the cytochrome b family. The main subunits of complex b-c1 are: cytochrome b, cytochrome c1 and the Rieske protein. It depends on heme b as a cofactor.

Its subcellular location is the mitochondrion inner membrane. Its function is as follows. Component of the ubiquinol-cytochrome c reductase complex (complex III or cytochrome b-c1 complex) that is part of the mitochondrial respiratory chain. The b-c1 complex mediates electron transfer from ubiquinol to cytochrome c. Contributes to the generation of a proton gradient across the mitochondrial membrane that is then used for ATP synthesis. This is Cytochrome b (MT-CYB) from Acanthamoeba castellanii (Amoeba).